A 432-amino-acid polypeptide reads, in one-letter code: Bifunctional IPC transferase and DIPP synthase (432 aa).

The segment at 3 to 225 (PERAVILAAG…RARRMLVRTA (223 aa)) is mobA-like NTP transferase. Residues 9–11 (LAA), lysine 22, and glutamate 113 contribute to the CTP site. Position 113 (glutamate 113) interacts with Mg(2+). A CDP-alcohol phosphatidyltransferases region spans residues 226 to 426 (VKGTGDGFVS…LTLYFVVKKV (201 aa)). 3 consecutive transmembrane segments (helical) span residues 264-284 (FLLGIISALTTLVSLPLAGIL), 337-356 (IWYFVALLALLGSVMVSYST), and 385-405 (VFLTMLFLLYQIAASIKALFL).

This sequence in the N-terminal section; belongs to the MobA family. It in the C-terminal section; belongs to the CDP-alcohol phosphatidyltransferase class-I family. The cofactor is Mg(2+).

The protein resides in the membrane. It catalyses the reaction 1D-myo-inositol 3-phosphate + CTP + H(+) = CDP-1L-myo-inositol + diphosphate. The catalysed reaction is CDP-1L-myo-inositol + 1D-myo-inositol 3-phosphate = bis(1L-myo-inositol) 3,1'-phosphate 1-phosphate + CMP + H(+). Its function is as follows. Involved in biosynthesis of di-myo-inositol phosphate (DIP), a widespread organic solute in microorganisms adapted to hot environments. Catalyzes the condensation of CTP and L-myo-inositol-1-phosphate into CDP-L-myo-inositol, as well as the biosynthesis of di-myo-inositol-1,3'-phosphate-1'-phosphate (DIPP) from CDP-L-myo-inositol and L-myo-inositol-1-phosphate. In Thermococcus kodakarensis (strain ATCC BAA-918 / JCM 12380 / KOD1) (Pyrococcus kodakaraensis (strain KOD1)), this protein is Bifunctional IPC transferase and DIPP synthase.